A 248-amino-acid polypeptide reads, in one-letter code: Tyrosine recombinase XerD-like (248 aa).

The region spanning 1–72 (MKSYIEPFIA…TANQFLYYLY (72 aa)) is the Core-binding (CB) domain. Positions 85–248 (DTMKVMRTEK…PVTLEKYYKS (164 aa)) constitute a Tyr recombinase domain. Active-site residues include Lys149 and Arg213. The active-site O-(3'-phospho-DNA)-tyrosine intermediate is Tyr245.

The protein belongs to the 'phage' integrase family. XerD-like subfamily.

Its subcellular location is the cytoplasm. Functionally, putative tyrosine recombinase. Not involved in the cutting and rejoining of the recombining DNA molecules on dif(SL) site. In Streptococcus pyogenes serotype M28 (strain MGAS6180), this protein is Tyrosine recombinase XerD-like.